Consider the following 365-residue polypeptide: MIKFLSALILLLVTTAAQAERIRDLTSVQGVRQNSLIGYGLVVGLDGTGDQTTQTPFTTQTLNNMLSQLGITVPTGTNMQLKNVAAVMVTASLPPFGRQGQTIDVVVSSMGNAKSLRGGTLLMTPLKGVDSQVYALAQGNILVGGAGASAGGSSVQVNQLNGGRITNGAVIERELPSQFGVGNTLNLQLNDEDFSMAQQIADTINRVRGYGSATVLDARTIQVRVPSGNSSQVRFLADIQNMQVNVTPQDAKVVINSRTGSVVMNREVTLDSCAVAQGNLSVTVNRQANVSQPDTPFGGGQTVVTPQTQIDLRQSGGSLQSVRSSASLNNVVRSLNALGATPMDLMSILQSMQSAGCLRAKLEII.

The first 19 residues, 1–19, serve as a signal peptide directing secretion; it reads MIKFLSALILLLVTTAAQA.

This sequence belongs to the FlgI family. In terms of assembly, the basal body constitutes a major portion of the flagellar organelle and consists of four rings (L,P,S, and M) mounted on a central rod.

The protein localises to the periplasm. Its subcellular location is the bacterial flagellum basal body. Assembles around the rod to form the L-ring and probably protects the motor/basal body from shearing forces during rotation. The sequence is that of Flagellar P-ring protein from Shigella dysenteriae serotype 1 (strain Sd197).